The primary structure comprises 257 residues: Tryptophan synthase alpha chain (257 aa).

Residues Glu-47 and Asp-58 each act as proton acceptor in the active site.

The protein belongs to the TrpA family. As to quaternary structure, tetramer of two alpha and two beta chains.

The enzyme catalyses (1S,2R)-1-C-(indol-3-yl)glycerol 3-phosphate + L-serine = D-glyceraldehyde 3-phosphate + L-tryptophan + H2O. The protein operates within amino-acid biosynthesis; L-tryptophan biosynthesis; L-tryptophan from chorismate: step 5/5. Functionally, the alpha subunit is responsible for the aldol cleavage of indoleglycerol phosphate to indole and glyceraldehyde 3-phosphate. This chain is Tryptophan synthase alpha chain, found in Listeria monocytogenes serotype 4b (strain F2365).